We begin with the raw amino-acid sequence, 211 residues long: ATP phosphoribosyltransferase (211 aa).

This sequence belongs to the ATP phosphoribosyltransferase family. Short subfamily. Heteromultimer composed of HisG and HisZ subunits.

Its subcellular location is the cytoplasm. It carries out the reaction 1-(5-phospho-beta-D-ribosyl)-ATP + diphosphate = 5-phospho-alpha-D-ribose 1-diphosphate + ATP. It participates in amino-acid biosynthesis; L-histidine biosynthesis; L-histidine from 5-phospho-alpha-D-ribose 1-diphosphate: step 1/9. Functionally, catalyzes the condensation of ATP and 5-phosphoribose 1-diphosphate to form N'-(5'-phosphoribosyl)-ATP (PR-ATP). Has a crucial role in the pathway because the rate of histidine biosynthesis seems to be controlled primarily by regulation of HisG enzymatic activity. This Bacillus cereus (strain G9842) protein is ATP phosphoribosyltransferase.